Consider the following 379-residue polypeptide: Homoserine O-succinyltransferase (379 aa).

The AB hydrolase-1 domain maps to 51-360 (NAVLICHALS…DSPYGHDAFL (310 aa)). The active-site Nucleophile is Ser157. A substrate-binding site is contributed by Arg227. Catalysis depends on residues Asp323 and His356. Residue Asp357 participates in substrate binding.

It belongs to the AB hydrolase superfamily. MetX family. In terms of assembly, homodimer.

The protein localises to the cytoplasm. The catalysed reaction is L-homoserine + succinyl-CoA = O-succinyl-L-homoserine + CoA. Its pathway is amino-acid biosynthesis; L-methionine biosynthesis via de novo pathway; O-succinyl-L-homoserine from L-homoserine: step 1/1. Its function is as follows. Transfers a succinyl group from succinyl-CoA to L-homoserine, forming succinyl-L-homoserine. The chain is Homoserine O-succinyltransferase from Pseudomonas putida (strain GB-1).